The chain runs to 95 residues: Small ribosomal subunit protein uS19 (95 aa).

Residues 76–95 are disordered; sequence PTRTFRGHGGKKADKRGKLK. The span at 80-95 shows a compositional bias: basic residues; that stretch reads FRGHGGKKADKRGKLK.

This sequence belongs to the universal ribosomal protein uS19 family.

Protein S19 forms a complex with S13 that binds strongly to the 16S ribosomal RNA. This chain is Small ribosomal subunit protein uS19, found in Herpetosiphon aurantiacus (strain ATCC 23779 / DSM 785 / 114-95).